Here is a 199-residue protein sequence, read N- to C-terminus: FMN-dependent NADH:quinone oxidoreductase (199 aa).

FMN contacts are provided by residues serine 9, 15–17 (SNS), and 95–98 (MYNF).

It belongs to the azoreductase type 1 family. As to quaternary structure, homodimer. The cofactor is FMN.

It catalyses the reaction 2 a quinone + NADH + H(+) = 2 a 1,4-benzosemiquinone + NAD(+). The catalysed reaction is N,N-dimethyl-1,4-phenylenediamine + anthranilate + 2 NAD(+) = 2-(4-dimethylaminophenyl)diazenylbenzoate + 2 NADH + 2 H(+). Its function is as follows. Quinone reductase that provides resistance to thiol-specific stress caused by electrophilic quinones. Functionally, also exhibits azoreductase activity. Catalyzes the reductive cleavage of the azo bond in aromatic azo compounds to the corresponding amines. This is FMN-dependent NADH:quinone oxidoreductase from Aromatoleum aromaticum (strain DSM 19018 / LMG 30748 / EbN1) (Azoarcus sp. (strain EbN1)).